The sequence spans 749 residues: Cytosolic phospholipase A2 (749 aa).

Residues 1–178 (MSFIDPYQHI…MKKLLGPKNS (178 aa)) form a phospholipid binding region. Ser2 carries the post-translational modification Phosphoserine. Positions 6–122 (PYQHIIVEHQ…KVGEKKEVPF (117 aa)) constitute a C2 domain. Residues Asp40, Thr41, Asp43, Asn65, Asp93, Ala94, and Asn95 each contribute to the Ca(2+) site. A PLA2c domain is found at 140 to 740 (SCPDLRFSMA…SNVEARRFFN (601 aa)). Ser228 acts as the Nucleophile in catalysis. Thr268 bears the Phosphothreonine mark. The segment at 409-457 (GSQSRGSTMEEELENITTKHIVSNDSSDSDDESHEPKGTENEDAGSDYQ) is disordered. Phosphoserine occurs at positions 434, 435, and 437. Phosphoserine; by MAPK is present on Ser505. The residue at position 515 (Ser515) is a Phosphoserine. A Glycyl lysine isopeptide (Lys-Gly) (interchain with G-Cter in SUMO2) cross-link involves residue Lys541. Residue Asp549 is the Proton acceptor of the active site. A Glycyl lysine isopeptide (Lys-Gly) (interchain with G-Cter in SUMO2) cross-link involves residue Lys606. Ser727 and Ser729 each carry phosphoserine.

As to quaternary structure, interacts with KAT5. In terms of processing, phosphorylated at both Ser-505 and Ser-727 in response to mitogenic stimuli.

The protein localises to the cytoplasm. It localises to the golgi apparatus membrane. Its subcellular location is the nucleus envelope. The enzyme catalyses a 1,2-diacyl-sn-glycero-3-phosphocholine + H2O = a 1-acyl-sn-glycero-3-phosphocholine + a fatty acid + H(+). It catalyses the reaction a 1-O-alkyl-2-acyl-sn-glycero-3-phosphocholine + H2O = a 1-O-alkyl-sn-glycero-3-phosphocholine + a fatty acid + H(+). The catalysed reaction is a 1-acyl-sn-glycero-3-phosphocholine + H2O = sn-glycerol 3-phosphocholine + a fatty acid + H(+). It carries out the reaction 1-hexadecanoyl-2-(5Z,8Z,11Z,14Z-eicosatetraenoyl)-sn-glycero-3-phosphocholine + H2O = 1-hexadecanoyl-sn-glycero-3-phosphocholine + (5Z,8Z,11Z,14Z)-eicosatetraenoate + H(+). The enzyme catalyses 1,2-di-(5Z,8Z,11Z,14Z-eicosatetraenoyl)-sn-glycero-3-phosphocholine + H2O = 1-(5Z,8Z,11Z,14Z-eicosatetraenoyl)-sn-glycero-3-phosphocholine + (5Z,8Z,11Z,14Z)-eicosatetraenoate + H(+). It catalyses the reaction 1-octadecanoyl-2-(5Z,8Z,11Z,14Z-eicosatetraenoyl)-sn-glycero-3-phosphocholine + H2O = 1-octadecanoyl-sn-glycero-3-phosphocholine + (5Z,8Z,11Z,14Z)-eicosatetraenoate + H(+). The catalysed reaction is 1-hexadecanoyl-2-(9Z,12Z-octadecadienoyl)-sn-glycero-3-phosphocholine + H2O = (9Z,12Z)-octadecadienoate + 1-hexadecanoyl-sn-glycero-3-phosphocholine + H(+). It carries out the reaction 1-octadecanoyl-2-(9Z,12Z,15Z-octadecatrienoyl)-sn-glycero-3-phosphocholine + H2O = (9Z,12Z,15Z)-octadecatrienoate + 1-octadecanoyl-sn-glycero-3-phosphocholine + H(+). The enzyme catalyses 1-(5Z,8Z,11Z,14Z-eicosatetraenoyl)-2-hexadecanoyl-sn-glycero-3-phosphocholine + H2O = 1-(5Z,8Z,11Z,14Z-eicosatetraenoyl)-sn-glycero-3-phosphocholine + hexadecanoate + H(+). It catalyses the reaction 1-O-hexadecyl-2-(5Z,8Z,11Z,14Z)-eicosatetraenoyl-sn-glycero-3-phosphocholine + H2O = 1-O-hexadecyl-sn-glycero-3-phosphocholine + (5Z,8Z,11Z,14Z)-eicosatetraenoate + H(+). The catalysed reaction is 1,2-di-(9Z-octadecenoyl)-sn-glycero-3-phospho-(1'-sn-glycerol) + H2O = 1-(9Z-octadecenoyl)-sn-glycero-3-phospho-(1'-sn-glycerol) + (9Z)-octadecenoate + H(+). It carries out the reaction 1-octadecanoyl-2-(5Z,8Z,11Z,14Z-eicosatetraenoyl)-sn-glycero-3-phosphate + H2O = 1-octadecanoyl-sn-glycero-3-phosphate + (5Z,8Z,11Z,14Z)-eicosatetraenoate + H(+). The enzyme catalyses 1-hexadecanoyl-sn-glycero-3-phosphocholine + H2O = sn-glycerol 3-phosphocholine + hexadecanoate + H(+). It catalyses the reaction 2-(prostaglandin E2)-sn-glycero-3-phosphoethanolamine + H2O = sn-glycero-3-phosphoethanolamine + prostaglandin E2 + H(+). The catalysed reaction is 2-[(15S)-hydroxy-(5Z,8Z,11Z,13E)-eicosatetraenoyl]-sn-glycero-3-phosphocholine + H2O = (15S)-hydroxy-(5Z,8Z,11Z,13E)-eicosatetraenoate + sn-glycerol 3-phosphocholine + H(+). It carries out the reaction 2-[(15R)-hydroxy-(5Z,8Z,11Z,13E)-eicosatetraenoyl]-sn-glycero-3-phosphocholine + H2O = (15R)-hydroxy-(5Z,8Z,11Z,13E)-eicosatetraenoate + sn-glycerol 3-phosphocholine + H(+). The enzyme catalyses 2-(prostaglandin E2)-sn-glycero-3-phosphocholine + H2O = prostaglandin E2 + sn-glycerol 3-phosphocholine + H(+). It catalyses the reaction 2-[(11R)-hydroxy-(5Z,8Z,12E,14Z)-eicosatetraenoyl]-sn-glycero-3-phosphocholine + H2O = (11R)-hydroxy-(5Z,8Z,12E,14Z)-eicosatetraenoate + sn-glycerol 3-phosphocholine + H(+). The catalysed reaction is 1-(5Z,8Z,11Z,14Z-eicosatetraenoyl)-2-O-hexadecyl-sn-glycero-3-phosphocholine + H2O = 2-O-hexadecyl-sn-glycero-3-phosphocholine + (5Z,8Z,11Z,14Z)-eicosatetraenoate + H(+). It carries out the reaction 1-octadecanoyl-2-(5Z,8Z,11Z,14Z-eicosatetraenoyl)-sn-glycero-3-phosphocholine + glycerol = 1-(5Z,8Z,11Z,14Z-eicosatetraenoyl)-glycerol + 1-octadecanoyl-sn-glycero-3-phosphocholine. The enzyme catalyses 1-octadecanoyl-2-(9Z,12Z,15Z-octadecatrienoyl)-sn-glycero-3-phosphocholine + glycerol = 1-(9Z,12Z,15Z-octadecatrienoyl)-glycerol + 1-octadecanoyl-sn-glycero-3-phosphocholine. Its pathway is membrane lipid metabolism; glycerophospholipid metabolism. It participates in lipid metabolism; arachidonate metabolism. The protein operates within lipid metabolism; prostaglandin biosynthesis. It functions in the pathway lipid metabolism; leukotriene B4 biosynthesis. Activated by cytosolic calcium, which is necessary for binding to membrane lipids. Activated by phosphorylation in response to mitogenic stimuli. Its function is as follows. Has primarily calcium-dependent phospholipase and lysophospholipase activities, with a major role in membrane lipid remodeling and biosynthesis of lipid mediators of the inflammatory response. Plays an important role in embryo implantation and parturition through its ability to trigger prostanoid production. Preferentially hydrolyzes the ester bond of the fatty acyl group attached at sn-2 position of phospholipids (phospholipase A2 activity). Selectively hydrolyzes sn-2 arachidonoyl group from membrane phospholipids, providing the precursor for eicosanoid biosynthesis via the cyclooxygenase pathway. In an alternative pathway of eicosanoid biosynthesis, hydrolyzes sn-2 fatty acyl chain of eicosanoid lysophopholipids to release free bioactive eicosanoids. Hydrolyzes the ester bond of the fatty acyl group attached at sn-1 position of phospholipids (phospholipase A1 activity) only if an ether linkage rather than an ester linkage is present at the sn-2 position. This hydrolysis is not stereospecific. Has calcium-independent phospholipase A2 and lysophospholipase activities in the presence of phosphoinositides. Has O-acyltransferase activity. Catalyzes the transfer of fatty acyl chains from phospholipids to a primary hydroxyl group of glycerol (sn-1 or sn-3), potentially contributing to monoacylglycerol synthesis. The sequence is that of Cytosolic phospholipase A2 (PLA2G4A) from Pongo abelii (Sumatran orangutan).